The sequence spans 418 residues: MYRPARVTSTSRFLNPYVVCFIVVAGVVILAVTIALLVYFLAFDQKSYFYRSSFQLLNVEYNSQLNSPATQEYRTLSGRIESLITKTFKESNLRNQFIRAHVAKLRQDGSGVRADVVMKFQFTRNNNGASMKSRIESVLRQMLNNSGNLEINPSTEITSLTDQAAANWLINECGAGPDLITLSEQRILGGTEAEEGSWPWQVSLRLNNAHHCGGSLINNMWILTAAHCFRSNSNPRDWIATSGISTTFPKLRMRVRNILIHNNYKSATHENDIALVRLENSVTFTKDIHSVCLPAATQNIPPGSTAYVTGWGAQEYAGHTVPELRQGQVRIISNDVCNAPHSYNGAILSGMLCAGVPQGGVDACQGDSGGPLVQEDSRRLWFIVGIVSWGDQCGLPDKPGVYTRVTAYLDWIRQQTGI.

The Cytoplasmic segment spans residues 1-20 (MYRPARVTSTSRFLNPYVVC). A helical; Signal-anchor for type II membrane protein membrane pass occupies residues 21–41 (FIVVAGVVILAVTIALLVYFL). At 42–418 (AFDQKSYFYR…LDWIRQQTGI (377 aa)) the chain is on the extracellular side. An SEA domain is found at 46–163 (KSYFYRSSFQ…STEITSLTDQ (118 aa)). N144 is a glycosylation site (N-linked (GlcNAc...) asparagine). Cystine bridges form between C173–C292, C212–C228, C337–C353, and C364–C393. A Peptidase S1 domain is found at 187–417 (ILGGTEAEEG…YLDWIRQQTG (231 aa)). Active-site charge relay system residues include H227 and D272. Catalysis depends on S368, which acts as the Charge relay system.

Belongs to the peptidase S1 family. As to quaternary structure, monomer. Located in the cells of the submucosal serous glands of the bronchi and trachea.

The protein localises to the cell membrane. It is found in the secreted. Strongly inhibited by diisopropyl fluorophosphate, leupeptin, antipain, aprotinin, and soybean trypsin inhibitor, but hardly inhibited by secretory leukocyte protease inhibitor at 10 microM. In terms of biological role, may play some biological role in the host defense system on the mucous membrane independently of or in cooperation with other substances in airway mucous or bronchial secretions. Plays a role in the proteolytic processing of ACE2. Proteolytically cleaves and activates the human coronavirus 229E (HCoV-229E) spike glycoprotein which facilitate virus-cell membrane fusions; spike proteins are synthesized and maintained in precursor intermediate folding states and proteolysis permits the refolding and energy release required to create stable virus-cell linkages and membrane coalescence. Preferentially cleaves the C-terminal side of arginine residues at the P1 position of certain peptides, cleaving Boc-Phe-Ser-Arg-4-methylcoumaryl-7-amide most efficiently and having an optimum pH of 8.6 with this substrate. This chain is Transmembrane protease serine 11D (TMPRSS11D), found in Homo sapiens (Human).